Reading from the N-terminus, the 152-residue chain is Large ribosomal subunit protein bL9 (152 aa).

The protein belongs to the bacterial ribosomal protein bL9 family.

In terms of biological role, binds to the 23S rRNA. The sequence is that of Large ribosomal subunit protein bL9 from Microcystis aeruginosa (strain NIES-843 / IAM M-2473).